The chain runs to 2534 residues: Highly reducing polyketide synthase easB (2534 aa).

Positions 1–49 are disordered; sequence MSPASRSRVEIADSESDSERLSSSPWSILSDNDSNTSDERSTRAGPGSL. Residues 49 to 470 enclose the Ketosynthase family 3 (KS3) domain; that stretch reads LEPIAVIGIG…GTNAHVIIDA (422 aa). Active-site for beta-ketoacyl synthase activity residues include C222, H356, and H396. The tract at residues 587-885 is malonyl-CoA:ACP transacylase (MAT) domain; sequence IFSGQGAQYA…LSGPVNQILK (299 aa). Residues 973–1111 are N-terminal hotdog fold; it reads HELLGTLSAD…GLVQAEVDSV (139 aa). Residues 973-1273 are dehydratase (DH) domain; that stretch reads HELLGTLSAD…QGIRVTSLGG (301 aa). In terms of domain architecture, PKS/mFAS DH spans 973-1277; that stretch reads HELLGTLSAD…VTSLGGDVAA (305 aa). Residue H1005 is the Proton acceptor; for dehydratase activity of the active site. The interval 1131–1277 is C-terminal hotdog fold; the sequence is THGTIPQKFY…VTSLGGDVAA (147 aa). D1193 functions as the Proton donor; for dehydratase activity in the catalytic mechanism. Residues 1395–1625 are methyltransferase (CMet) domain; the sequence is KTSALSLLTK…VFISTAPFPR (231 aa). Residues 1834-2146 are enoyl reductase (ER) domain; that stretch reads GLLETIRWKD…AGKHTGKIVL (313 aa). The 78-residue stretch at 2452-2529 folds into the Carrier domain; that stretch reads EAVHIVTNAI…QLAAIVAKES (78 aa). Positions 2453 to 2526 are ketoreductase (KR) domain; sequence AVHIVTNAIL…SISQLAAIVA (74 aa). S2489 carries the post-translational modification O-(pantetheine 4'-phosphoryl)serine.

It functions in the pathway antibiotic biosynthesis. Its function is as follows. Polyketide synthase; part of the gene cluster that mediates the biosynthesis of emericellamides, secondary metabolites acting as antibiotics. The biosynthesis of emericellamides initiates from the highly reducing polyketide synthase easB which catalyzes the formation of the linear polyketide chain. EasB produces several polyketides that can be further processed by the downstream enzymes. The polyketides are released from easB as linear polyketide carboxylic acids, which are converted to CoA thioesters by the acyl-CoA ligase easD. The substrates are then loaded onto the acyltransferase easC, which shuttles them to the first thiolation (T) domain of the nonribosomal peptide synthetase easA. EasA then performs condensation of the polyketides with one glycine, two alanine, one valine and one leucine residues. A last step of cyclization leads to the production of emericellamides. In Emericella nidulans (strain FGSC A4 / ATCC 38163 / CBS 112.46 / NRRL 194 / M139) (Aspergillus nidulans), this protein is Highly reducing polyketide synthase easB.